Consider the following 194-residue polypeptide: MGRNKEFDTALVLHRAIEVFGEYGYEGTSLQDLLSHLGIARQSLYDTYGTKRDLFLSAVKSYLEGKNAAVMERLEAPGSVKEAIRDIFQEGVNALRDPERAKACYIINSAIEQIPHDPELARYFERQSKQLEDAFYHGLLRAKDQGELNGEDTDISALARYLNQSRLSLTFIAKVTADMDRLQDHVDVSLSVLD.

The HTH tetR-type domain maps to 6-66 (EFDTALVLHR…SAVKSYLEGK (61 aa)). A DNA-binding region (H-T-H motif) is located at residues 29-48 (SLQDLLSHLGIARQSLYDTY).

This is an uncharacterized protein from Bacillus subtilis (strain 168).